The following is a 208-amino-acid chain: FMN-dependent NADH:quinone oxidoreductase (208 aa).

FMN is bound by residues serine 9, 15-17 (SVS), 96-99 (MYNF), and 140-143 (TRGG).

It belongs to the azoreductase type 1 family. Homodimer. FMN is required as a cofactor.

It catalyses the reaction 2 a quinone + NADH + H(+) = 2 a 1,4-benzosemiquinone + NAD(+). The catalysed reaction is N,N-dimethyl-1,4-phenylenediamine + anthranilate + 2 NAD(+) = 2-(4-dimethylaminophenyl)diazenylbenzoate + 2 NADH + 2 H(+). Functionally, quinone reductase that provides resistance to thiol-specific stress caused by electrophilic quinones. Also exhibits azoreductase activity. Catalyzes the reductive cleavage of the azo bond in aromatic azo compounds to the corresponding amines. This chain is FMN-dependent NADH:quinone oxidoreductase, found in Azospirillum brasilense.